An 88-amino-acid polypeptide reads, in one-letter code: Large ribosomal subunit protein eL20 (88 aa).

It belongs to the eukaryotic ribosomal protein eL20 family. Part of the 50S ribosomal subunit. Binds 23S rRNA.

The protein is Large ribosomal subunit protein eL20 of Aeropyrum pernix (strain ATCC 700893 / DSM 11879 / JCM 9820 / NBRC 100138 / K1).